A 709-amino-acid chain; its full sequence is Leucine-rich repeat-containing protein 4B (709 aa).

The first 38 residues, 1–38, serve as a signal peptide directing secretion; sequence MAQAHIQGSPCPLLPPGRMSWPQGALLLLWLFSPPLRA. One can recognise an LRRNT domain in the interval 50–88; sequence GGGSPPATSCPAACSCSNQASRVICTRRELAEVPASIPV. 9 LRR repeats span residues 89–110, 113–134, 137–158, 161–182, 185–207, 210–231, 232–253, 256–277, and 280–301; these read NTRY…TFKH, HLEI…AFNG, SLNT…AFEY, KLRE…AFNR, SLRR…AFEG, NLRY…TALV, RLEE…SFQG, SLRK…AFDD, and SLEE…LFTP. The LRRCT domain occupies 313–365; sequence NPWHCNCDVLWLSWWLKETVPSNTTCCARCHAPAGLKGRYIGELDQSHFTCYA. Positions 366-454 constitute an Ig-like C2-type domain; sequence PVIVEPPTDL…GNTTASATLN (89 aa). Asparagine 376, asparagine 402, asparagine 424, asparagine 427, and asparagine 446 each carry an N-linked (GlcNAc...) asparagine glycan. Cysteine 387 and cysteine 438 form a disulfide bridge. Positions 496-552 are disordered; the sequence is TQPGEEAQQPRGTEKEPPGPTTDGAWGGGRPDAAAPASASTTAPAPRSSRPTEKAFT. Positions 528–544 are enriched in low complexity; it reads AAAPASASTTAPAPRSS. A helical membrane pass occupies residues 575-595; sequence IIIGCFVAITFMAAVMLVAFY. Phosphoserine is present on serine 689.

Interacts with PTPRF. Interacts with DLG4. In terms of processing, N-glycosylated. O-glycosylated; contains sialic acid. In terms of tissue distribution, mainly expressed in the brain. Widespread distribution in various brain regions (at protein level). Detected both embryonically and postnatally with stronger expression in postnatal stages.

The protein localises to the membrane. It is found in the presynaptic cell membrane. Synaptic adhesion protein. Regulates the formation of excitatory synapses. The trans-synaptic adhesion between LRRC4B and PTPRF regulates the formation of excitatory synapses in a bidirectional manner. This chain is Leucine-rich repeat-containing protein 4B (Lrrc4b), found in Rattus norvegicus (Rat).